Here is a 910-residue protein sequence, read N- to C-terminus: DNA mismatch repair protein MutS (910 aa).

Positions 1-11 (MEAKVEEKEPE) are enriched in basic and acidic residues. The interval 1-21 (MEAKVEEKEPEPVENAGPDAP) is disordered. Residue 658-665 (GPNMGGKS) participates in ATP binding.

Belongs to the DNA mismatch repair MutS family.

Its function is as follows. This protein is involved in the repair of mismatches in DNA. It is possible that it carries out the mismatch recognition step. This protein has a weak ATPase activity. This is DNA mismatch repair protein MutS from Brucella suis (strain ATCC 23445 / NCTC 10510).